The following is a 316-amino-acid chain: Ribosomal RNA small subunit methyltransferase H (316 aa).

Residues serine 35 to histidine 37, aspartate 55, phenylalanine 84, aspartate 105, and glutamine 112 each bind S-adenosyl-L-methionine.

The protein belongs to the methyltransferase superfamily. RsmH family.

The protein localises to the cytoplasm. It carries out the reaction cytidine(1402) in 16S rRNA + S-adenosyl-L-methionine = N(4)-methylcytidine(1402) in 16S rRNA + S-adenosyl-L-homocysteine + H(+). Specifically methylates the N4 position of cytidine in position 1402 (C1402) of 16S rRNA. This chain is Ribosomal RNA small subunit methyltransferase H, found in Streptococcus pyogenes serotype M4 (strain MGAS10750).